The primary structure comprises 703 residues: Polyribonucleotide nucleotidyltransferase (703 aa).

Residues Asp-486 and Asp-492 each contribute to the Mg(2+) site. One can recognise a KH domain in the interval 554–613 (PKIITTNIDPEKIRDVIGPGGKMINKIIAETGVKIDIEEDGRVYILTPDSAAAQKALKII). The S1 motif domain maps to 623–691 (GEVYLGKVVR…KQGRINLSRK (69 aa)).

The protein belongs to the polyribonucleotide nucleotidyltransferase family. Mg(2+) serves as cofactor.

It localises to the cytoplasm. It carries out the reaction RNA(n+1) + phosphate = RNA(n) + a ribonucleoside 5'-diphosphate. Its function is as follows. Involved in mRNA degradation. Catalyzes the phosphorolysis of single-stranded polyribonucleotides processively in the 3'- to 5'-direction. In Ruminiclostridium cellulolyticum (strain ATCC 35319 / DSM 5812 / JCM 6584 / H10) (Clostridium cellulolyticum), this protein is Polyribonucleotide nucleotidyltransferase.